Reading from the N-terminus, the 429-residue chain is Endoglucanase A (429 aa).

A signal peptide spans 1–34 (MVSKKQKFLTVILVIVLAIVIVGGVFGISFVKGR). Basic and acidic residues predominate over residues 46 to 94 (AKTEQVKEPAKEEPKLVIKEKKQDESAKKEQELKKAKEEAEAAVEKETE). Positions 46-100 (AKTEQVKEPAKEEPKLVIKEKKQDESAKKEQELKKAKEEAEAAVEKETEKTEEEP) are disordered. The active-site Proton donor is Glu249. The Nucleophile role is filled by Glu334.

Belongs to the glycosyl hydrolase 5 (cellulase A) family.

It catalyses the reaction Endohydrolysis of (1-&gt;4)-beta-D-glucosidic linkages in cellulose, lichenin and cereal beta-D-glucans.. The sequence is that of Endoglucanase A (celA) from Butyrivibrio fibrisolvens.